Here is a 444-residue protein sequence, read N- to C-terminus: Ribulose bisphosphate carboxylase large chain (444 aa).

N6,N6,N6-trimethyllysine is present on K5. Substrate is bound by residues N114 and T164. K166 (proton acceptor) is an active-site residue. Residue K168 coordinates substrate. Residues K192, D194, and E195 each contribute to the Mg(2+) site. K192 bears the N6-carboxylysine mark. The active-site Proton acceptor is H285. The substrate site is built by R286, H318, and S370.

Belongs to the RuBisCO large chain family. Type I subfamily. Heterohexadecamer of 8 large chains and 8 small chains; disulfide-linked. The disulfide link is formed within the large subunit homodimers. Mg(2+) is required as a cofactor. The disulfide bond which can form in the large chain dimeric partners within the hexadecamer appears to be associated with oxidative stress and protein turnover.

It is found in the plastid. It localises to the chloroplast. The enzyme catalyses 2 (2R)-3-phosphoglycerate + 2 H(+) = D-ribulose 1,5-bisphosphate + CO2 + H2O. The catalysed reaction is D-ribulose 1,5-bisphosphate + O2 = 2-phosphoglycolate + (2R)-3-phosphoglycerate + 2 H(+). RuBisCO catalyzes two reactions: the carboxylation of D-ribulose 1,5-bisphosphate, the primary event in carbon dioxide fixation, as well as the oxidative fragmentation of the pentose substrate in the photorespiration process. Both reactions occur simultaneously and in competition at the same active site. In Botrychium strictum (Fern), this protein is Ribulose bisphosphate carboxylase large chain.